A 244-amino-acid polypeptide reads, in one-letter code: Isoprenyl transferase (244 aa).

The active site involves Asp-23. Asp-23 provides a ligand contact to Mg(2+). Substrate-binding positions include 24–27, Trp-28, Arg-36, His-40, and 68–70; these read GNGR and STE. Asn-71 (proton acceptor) is an active-site residue. Substrate contacts are provided by residues Trp-72, Arg-74, Arg-191, and 197–199; that span reads RMS. Glu-210 contributes to the Mg(2+) binding site.

This sequence belongs to the UPP synthase family. Homodimer. Mg(2+) is required as a cofactor.

Its function is as follows. Catalyzes the condensation of isopentenyl diphosphate (IPP) with allylic pyrophosphates generating different type of terpenoids. This chain is Isoprenyl transferase, found in Lactococcus lactis subsp. lactis (strain IL1403) (Streptococcus lactis).